Consider the following 281-residue polypeptide: Pantothenate synthetase (281 aa).

30 to 37 is an ATP binding site; that stretch reads MGYLHEGH. The active-site Proton donor is histidine 37. Residue glutamine 60 participates in (R)-pantoate binding. Glutamine 60 contributes to the beta-alanine binding site. Residue 146–149 coordinates ATP; sequence GEKD. Position 152 (glutamine 152) interacts with (R)-pantoate. Residues isoleucine 175 and 183–186 contribute to the ATP site; that span reads KSSR.

Belongs to the pantothenate synthetase family. In terms of assembly, homodimer.

The protein resides in the cytoplasm. The catalysed reaction is (R)-pantoate + beta-alanine + ATP = (R)-pantothenate + AMP + diphosphate + H(+). The protein operates within cofactor biosynthesis; (R)-pantothenate biosynthesis; (R)-pantothenate from (R)-pantoate and beta-alanine: step 1/1. Functionally, catalyzes the condensation of pantoate with beta-alanine in an ATP-dependent reaction via a pantoyl-adenylate intermediate. In Ruminiclostridium cellulolyticum (strain ATCC 35319 / DSM 5812 / JCM 6584 / H10) (Clostridium cellulolyticum), this protein is Pantothenate synthetase.